A 132-amino-acid chain; its full sequence is ATP synthase epsilon chain (132 aa).

The protein belongs to the ATPase epsilon chain family. F-type ATPases have 2 components, CF(1) - the catalytic core - and CF(0) - the membrane proton channel. CF(1) has five subunits: alpha(3), beta(3), gamma(1), delta(1), epsilon(1). CF(0) has three main subunits: a, b and c.

It is found in the cell membrane. Functionally, produces ATP from ADP in the presence of a proton gradient across the membrane. The sequence is that of ATP synthase epsilon chain from Desulforamulus reducens (strain ATCC BAA-1160 / DSM 100696 / MI-1) (Desulfotomaculum reducens).